The primary structure comprises 432 residues: Glutamate-1-semialdehyde 2,1-aminomutase 2 (432 aa).

An N6-(pyridoxal phosphate)lysine modification is found at Lys268.

Belongs to the class-III pyridoxal-phosphate-dependent aminotransferase family. HemL subfamily. As to quaternary structure, homodimer. Requires pyridoxal 5'-phosphate as cofactor.

Its subcellular location is the cytoplasm. It carries out the reaction (S)-4-amino-5-oxopentanoate = 5-aminolevulinate. Its pathway is porphyrin-containing compound metabolism; protoporphyrin-IX biosynthesis; 5-aminolevulinate from L-glutamyl-tRNA(Glu): step 2/2. This chain is Glutamate-1-semialdehyde 2,1-aminomutase 2, found in Listeria monocytogenes serotype 4b (strain CLIP80459).